A 785-amino-acid polypeptide reads, in one-letter code: Putative lipase C4A8.10 (785 aa).

2 disordered regions span residues 29–99 (HSAT…SSDF) and 115–140 (NTNAINIPEQTRGVSHTSSSPSVGTS). A compositionally biased stretch (low complexity) spans 32–41 (TSSTTVPPTV). Basic and acidic residues predominate over residues 47-58 (TKKESGSIEDRA). The segment covering 63–86 (MTISSGENISKQISENNSSTNPKH) has biased composition (polar residues). Low complexity-rich tracts occupy residues 89-99 (SESSPLLSSDF) and 127-140 (GVSHTSSSPSVGTS). Catalysis depends on S390, which acts as the Charge relay system.

This sequence belongs to the putative lipase ROG1 family.

This is Putative lipase C4A8.10 from Schizosaccharomyces pombe (strain 972 / ATCC 24843) (Fission yeast).